A 101-amino-acid chain; its full sequence is Small ribosomal subunit protein uS14 (101 aa).

The protein belongs to the universal ribosomal protein uS14 family. Part of the 30S ribosomal subunit. Contacts proteins S3 and S10.

Binds 16S rRNA, required for the assembly of 30S particles and may also be responsible for determining the conformation of the 16S rRNA at the A site. The polypeptide is Small ribosomal subunit protein uS14 (Haemophilus influenzae (strain 86-028NP)).